Reading from the N-terminus, the 476-residue chain is MEYEAVIGLEVHAELKTASKAFCSCSTAFGGEPNTHVCPVCLGLPGVLPVINRQVVEFGLKTALALNCRVAPFCKFDRKNYYYPDLPKNYQISQYDLPLATGGYLKINVDGQERVIGITRVHMEEDAGKLVHVDGPGGGYSLVDYNRTGVPLLEIVSEPDLRSPAEARAYMEKLRAILQYLDVSDCKMEEGSLRCDANVSVRPRGSQTFGTKTEVKNMNSFRALQRALEYEIERQIAILEGGGRVEQATMAWDESRGVTTVMRTKEQAHDYRYFPEPDLVPLEIDAAWIERVRRELPELPDARCRRLMDTFGLPAYDAGVITSSRDLADYFDRVVARYPDAKVVSNWIMGDFLRLLNARNLEPGQAPVPPEELADLLELQKEGTISGKIAKQVLEEMFASGKGARQIVQERGLVQISDTAALGKIVDEVLAANPNVVEDYRNGKEKALGFLVGQVMKATGGKANPGLVNKLLKERL.

Belongs to the GatB/GatE family. GatB subfamily. Heterotrimer of A, B and C subunits.

The enzyme catalyses L-glutamyl-tRNA(Gln) + L-glutamine + ATP + H2O = L-glutaminyl-tRNA(Gln) + L-glutamate + ADP + phosphate + H(+). The catalysed reaction is L-aspartyl-tRNA(Asn) + L-glutamine + ATP + H2O = L-asparaginyl-tRNA(Asn) + L-glutamate + ADP + phosphate + 2 H(+). In terms of biological role, allows the formation of correctly charged Asn-tRNA(Asn) or Gln-tRNA(Gln) through the transamidation of misacylated Asp-tRNA(Asn) or Glu-tRNA(Gln) in organisms which lack either or both of asparaginyl-tRNA or glutaminyl-tRNA synthetases. The reaction takes place in the presence of glutamine and ATP through an activated phospho-Asp-tRNA(Asn) or phospho-Glu-tRNA(Gln). This Moorella thermoacetica (strain ATCC 39073 / JCM 9320) protein is Aspartyl/glutamyl-tRNA(Asn/Gln) amidotransferase subunit B.